The chain runs to 212 residues: Interleukin-6 (212 aa).

Positions 1–29 (MNSFSTSAFGPVAFSLGLLLVLPAAFPAP) are cleaved as a signal peptide. The cysteines at positions 72 and 78 are disulfide-linked. Asparagine 73 carries N-linked (GlcNAc...) asparagine glycosylation. Phosphoserine; by FAM20C is present on serine 81. Cysteines 101 and 111 form a disulfide.

The protein belongs to the IL-6 superfamily. Component of a hexamer of two molecules each of IL6, IL6R and IL6ST; first binds to IL6R to associate with the signaling subunit IL6ST. Interacts with IL6R (via the N-terminal ectodomain); this interaction may be affected by IL6R-binding with SORL1, hence decreasing IL6 cis signaling. Interacts with SORL1 (via the N-terminal ectodomain); this interaction leads to IL6 internalization and lysosomal degradation. May form a trimeric complex with the soluble SORL1 ectodomain and soluble IL6R receptor; this interaction might stabilize circulating IL6, hence promoting IL6 trans signaling. N- and O-glycosylated. In terms of tissue distribution, produced by skeletal muscle.

It localises to the secreted. Functionally, cytokine with a wide variety of biological functions in immunity, tissue regeneration, and metabolism. Binds to IL6R, then the complex associates to the signaling subunit IL6ST/gp130 to trigger the intracellular IL6-signaling pathway. The interaction with the membrane-bound IL6R and IL6ST stimulates 'classic signaling', whereas the binding of IL6 and soluble IL6R to IL6ST stimulates 'trans-signaling'. Alternatively, 'cluster signaling' occurs when membrane-bound IL6:IL6R complexes on transmitter cells activate IL6ST receptors on neighboring receiver cells. IL6 is a potent inducer of the acute phase response. Rapid production of IL6 contributes to host defense during infection and tissue injury, but excessive IL6 synthesis is involved in disease pathology. In the innate immune response, is synthesized by myeloid cells, such as macrophages and dendritic cells, upon recognition of pathogens through toll-like receptors (TLRs) at the site of infection or tissue injury. In the adaptive immune response, is required for the differentiation of B cells into immunoglobulin-secreting cells. Plays a major role in the differentiation of CD4(+) T cell subsets. Essential factor for the development of T follicular helper (Tfh) cells that are required for the induction of germinal-center formation. Required to drive naive CD4(+) T cells to the Th17 lineage. Also required for proliferation of myeloma cells and the survival of plasmablast cells. In terms of biological role, acts as an essential factor in bone homeostasis and on vessels directly or indirectly by induction of VEGF, resulting in increased angiogenesis activity and vascular permeability. Induces, through 'trans-signaling' and synergistically with IL1B and TNF, the production of VEGF. Involved in metabolic controls, is discharged into the bloodstream after muscle contraction increasing lipolysis and improving insulin resistance. 'Trans-signaling' in central nervous system also regulates energy and glucose homeostasis. Mediates, through GLP-1, crosstalk between insulin-sensitive tissues, intestinal L cells and pancreatic islets to adapt to changes in insulin demand. Also acts as a myokine. Plays a protective role during liver injury, being required for maintenance of tissue regeneration. Also has a pivotal role in iron metabolism by regulating HAMP/hepcidin expression upon inflammation or bacterial infection. Through activation of IL6ST-YAP-NOTCH pathway, induces inflammation-induced epithelial regeneration. The polypeptide is Interleukin-6 (Homo sapiens (Human)).